Here is a 493-residue protein sequence, read N- to C-terminus: Transcript termination protein A18 (493 aa).

One can recognise a Helicase ATP-binding domain in the interval 100–256 (MIELKRPLYI…NSIINIAKLS (157 aa)). An ATP-binding site is contributed by 113 to 120 (LACGFGKT). A DESH box motif is present at residues 206-209 (DESH).

Belongs to the helicase family. Poxviruses subfamily. Interacts with G2. Might be part of a transcription complex composed at least of G2, A18, and H5.

It localises to the virion. DNA helicase which seems to act as a postreplicative transcription termination factor. Involved in ATP-dependent release of nascent RNA. Forms a stable complex with single-stranded DNA, and to a lesser extent RNA. In Cowpox virus (strain GRI-90 / Grishak) (CPV), this protein is Transcript termination protein A18.